Here is a 253-residue protein sequence, read N- to C-terminus: DnaJ homolog subfamily C member 8 (253 aa).

Residue Ala-2 is modified to N-acetylalanine. At Ser-35 the chain carries Phosphoserine. The J domain maps to Asn-57–Gln-124. An N6-acetyllysine modification is found at Lys-146. Basic and acidic residues predominate over residues Glu-181–Ser-222. The interval Glu-181 to Glu-253 is disordered. 2 consecutive short sequence motifs (nuclear localization signal) follow at residues Lys-189–Arg-192 and Lys-203–Arg-206. Ser-222 is subject to Phosphoserine. The span at Lys-231–Thr-240 shows a compositional bias: basic residues. The interval Gly-232–Glu-253 is essential for polyglutamine aggregation suppression.

In terms of assembly, interacts with SRPK1. Interacts with HSP70 (HSPA1A or HSPA1B). Ubiquitous.

The protein resides in the nucleus. Functionally, suppresses polyglutamine (polyQ) aggregation of ATXN3 in neuronal cells. This Homo sapiens (Human) protein is DnaJ homolog subfamily C member 8 (DNAJC8).